The sequence spans 1081 residues: Carbamoyl phosphate synthase large chain (1081 aa).

The segment at 1 to 403 (MPRRNDLNKI…SFQKALRSLE (403 aa)) is carboxyphosphate synthetic domain. ATP is bound by residues R129, R170, G177, K209, L211, E216, G242, V243, H244, Q286, and E300. Positions 133–329 (KEAMARIGVP…IAKFAAKLAV (197 aa)) constitute an ATP-grasp 1 domain. Mg(2+)-binding residues include Q286, E300, and N302. The Mn(2+) site is built by Q286, E300, and N302. Positions 404–553 (TGRFGFGCDR…STYEPEECEV (150 aa)) are oligomerization domain. The carbamoyl phosphate synthetic domain stretch occupies residues 554–944 (LPSDKPKVMI…AFAKAELGAG (391 aa)). An ATP-grasp 2 domain is found at 686–878 (EKILHELEIS…LAKIASLVMS (193 aa)). Residues R722, K761, L763, E768, G794, I795, H796, S797, Q837, and E849 each contribute to the ATP site. Mg(2+) is bound by residues Q837, E849, and N851. Residues Q837, E849, and N851 each coordinate Mn(2+). Residues 945 to 1081 (VILATTGTVF…DVKALQDYLG (137 aa)) form the MGS-like domain. Positions 945–1081 (VILATTGTVF…DVKALQDYLG (137 aa)) are allosteric domain.

This sequence belongs to the CarB family. Composed of two chains; the small (or glutamine) chain promotes the hydrolysis of glutamine to ammonia, which is used by the large (or ammonia) chain to synthesize carbamoyl phosphate. Tetramer of heterodimers (alpha,beta)4. The cofactor is Mg(2+). Mn(2+) serves as cofactor.

It carries out the reaction hydrogencarbonate + L-glutamine + 2 ATP + H2O = carbamoyl phosphate + L-glutamate + 2 ADP + phosphate + 2 H(+). The enzyme catalyses hydrogencarbonate + NH4(+) + 2 ATP = carbamoyl phosphate + 2 ADP + phosphate + 2 H(+). It functions in the pathway amino-acid biosynthesis; L-arginine biosynthesis; carbamoyl phosphate from bicarbonate: step 1/1. The protein operates within pyrimidine metabolism; UMP biosynthesis via de novo pathway; (S)-dihydroorotate from bicarbonate: step 1/3. Functionally, large subunit of the glutamine-dependent carbamoyl phosphate synthetase (CPSase). CPSase catalyzes the formation of carbamoyl phosphate from the ammonia moiety of glutamine, carbonate, and phosphate donated by ATP, constituting the first step of 2 biosynthetic pathways, one leading to arginine and/or urea and the other to pyrimidine nucleotides. The large subunit (synthetase) binds the substrates ammonia (free or transferred from glutamine from the small subunit), hydrogencarbonate and ATP and carries out an ATP-coupled ligase reaction, activating hydrogencarbonate by forming carboxy phosphate which reacts with ammonia to form carbamoyl phosphate. The sequence is that of Carbamoyl phosphate synthase large chain from Synechocystis sp. (strain ATCC 27184 / PCC 6803 / Kazusa).